The chain runs to 939 residues: Isoleucine--tRNA ligase (939 aa).

The short motif at 57–67 is the 'HIGH' region element; sequence PYANGHIHLGH. Residue glutamate 561 coordinates L-isoleucyl-5'-AMP. Residues 602-606 carry the 'KMSKS' region motif; the sequence is KMSKS. An ATP-binding site is contributed by lysine 605. Positions 903, 906, 923, and 926 each coordinate Zn(2+).

Belongs to the class-I aminoacyl-tRNA synthetase family. IleS type 1 subfamily. In terms of assembly, monomer. Zn(2+) serves as cofactor.

Its subcellular location is the cytoplasm. The catalysed reaction is tRNA(Ile) + L-isoleucine + ATP = L-isoleucyl-tRNA(Ile) + AMP + diphosphate. Catalyzes the attachment of isoleucine to tRNA(Ile). As IleRS can inadvertently accommodate and process structurally similar amino acids such as valine, to avoid such errors it has two additional distinct tRNA(Ile)-dependent editing activities. One activity is designated as 'pretransfer' editing and involves the hydrolysis of activated Val-AMP. The other activity is designated 'posttransfer' editing and involves deacylation of mischarged Val-tRNA(Ile). This is Isoleucine--tRNA ligase from Desulfotalea psychrophila (strain LSv54 / DSM 12343).